The sequence spans 202 residues: MMTQYKLQLEATNFTKQQLQQQLDILEQNNILQIALAGRSNVGKSSLINALAGRKQLAKTSGTPGKTRSINFYAVYPNTFMLVDLPGYGYAQCSKIERQHWAMLIEYYLKNCSKLKAFVLLIDCRIPPQKLDYELAEFATSYCIPLIPVLTKIDKCKLVEQNKRQKEWRALLNNTQPLLVSSKNMKGVQQLWERIQYTIDSY.

The 172-residue stretch at Asn-30–Ser-201 folds into the EngB-type G domain. Residues Gly-38 to Ser-45, Gly-65 to Ser-69, Asp-84 to Gly-87, Thr-151 to Asp-154, and Val-180 to Ser-182 contribute to the GTP site. Residues Ser-45 and Thr-67 each coordinate Mg(2+).

The protein belongs to the TRAFAC class TrmE-Era-EngA-EngB-Septin-like GTPase superfamily. EngB GTPase family. The cofactor is Mg(2+).

Its function is as follows. Necessary for normal cell division and for the maintenance of normal septation. The protein is Probable GTP-binding protein EngB of Lawsonia intracellularis (strain PHE/MN1-00).